The chain runs to 388 residues: Ras-related protein Rab-26 (388 aa).

The disordered stretch occupies residues 1–115; sequence MASTAVGLGG…HHHSQLSLTG (115 aa). Residues 7-21 show a composition bias toward gly residues; sequence GLGGGEGDPGAGGPP. A compositionally biased stretch (basic and acidic residues) spans 47–56; sequence RIEELRRRPF. Low complexity predominate over residues 67–86; sequence PASVSASITTTTTQQQQQHH. Basic residues predominate over residues 87–109; sequence NPSHHHQSSHHQPSHHHHHHHHS. 197–204 provides a ligand contact to GTP; the sequence is GDSGVGKT. An Effector region motif is present at residues 219-228; it reads SFSATVGIAL. Residues 246 to 250 and 304 to 307 each bind GTP; these read DTAGQ and NKAD. Cys-382 is lipidated: S-palmitoyl cysteine. Cysteine methyl ester is present on Cys-385. A lipid anchor (S-geranylgeranyl cysteine) is attached at Cys-385. Residues 386-388 constitute a propeptide, removed in mature form; the sequence is RNM.

It belongs to the small GTPase superfamily. Rab family.

The protein resides in the cell membrane. Functionally, participates in exocrine secretion. The chain is Ras-related protein Rab-26 from Drosophila melanogaster (Fruit fly).